A 396-amino-acid polypeptide reads, in one-letter code: Elongation factor Tu (396 aa).

The tr-type G domain occupies 10–206 (KPHVNIGTIG…AVDEYIPTPQ (197 aa)). The segment at 19 to 26 (GHVDHGKT) is G1. 19-26 (GHVDHGKT) serves as a coordination point for GTP. Thr-26 contacts Mg(2+). The segment at 60 to 64 (GITIS) is G2. Residues 81–84 (DCPG) form a G3 region. GTP is bound by residues 81-85 (DCPGH) and 136-139 (NKVD). The interval 136–139 (NKVD) is G4. The tract at residues 174–176 (SAL) is G5.

The protein belongs to the TRAFAC class translation factor GTPase superfamily. Classic translation factor GTPase family. EF-Tu/EF-1A subfamily. As to quaternary structure, monomer.

The protein resides in the cytoplasm. It carries out the reaction GTP + H2O = GDP + phosphate + H(+). GTP hydrolase that promotes the GTP-dependent binding of aminoacyl-tRNA to the A-site of ribosomes during protein biosynthesis. This is Elongation factor Tu from Stigmatella aurantiaca.